A 527-amino-acid polypeptide reads, in one-letter code: Probable bifunctional tRNA threonylcarbamoyladenosine biosynthesis protein (527 aa).

The segment at 1–324 (MIVLGLEGTA…YRIDEVDAPW (324 aa)) is kae1. Fe cation contacts are provided by H107, H111, and Y128. Residues 128 to 132 (YVSGG), D160, G173, E177, and N257 each bind L-threonylcarbamoyladenylate. D285 contacts Fe cation. The Protein kinase domain maps to 330-527 (VKYRDAGAES…EDIRRRHRYV (198 aa)). Residues 333–341 (RDAGAESRI) and K354 contribute to the ATP site. The active-site Proton acceptor; for kinase activity is the D445.

This sequence in the N-terminal section; belongs to the KAE1 / TsaD family. In the C-terminal section; belongs to the protein kinase superfamily. Tyr protein kinase family. BUD32 subfamily. In terms of assembly, component of the KEOPS complex that consists of Kae1, Bud32, Cgi121 and Pcc1; the whole complex dimerizes. It depends on Fe(2+) as a cofactor.

The protein localises to the cytoplasm. It catalyses the reaction L-seryl-[protein] + ATP = O-phospho-L-seryl-[protein] + ADP + H(+). The catalysed reaction is L-threonyl-[protein] + ATP = O-phospho-L-threonyl-[protein] + ADP + H(+). It carries out the reaction L-threonylcarbamoyladenylate + adenosine(37) in tRNA = N(6)-L-threonylcarbamoyladenosine(37) in tRNA + AMP + H(+). Functionally, required for the formation of a threonylcarbamoyl group on adenosine at position 37 (t(6)A37) in tRNAs that read codons beginning with adenine. Is a component of the KEOPS complex that is probably involved in the transfer of the threonylcarbamoyl moiety of threonylcarbamoyl-AMP (TC-AMP) to the N6 group of A37. The Kae1 domain likely plays a direct catalytic role in this reaction. The Bud32 domain probably displays kinase activity that regulates Kae1 function. In Thermoplasma volcanium (strain ATCC 51530 / DSM 4299 / JCM 9571 / NBRC 15438 / GSS1), this protein is Probable bifunctional tRNA threonylcarbamoyladenosine biosynthesis protein.